The chain runs to 20 residues: 54 kDa cell wall protein (20 aa).

The disordered stretch occupies residues 1 to 20; it reads KVPVDDQFRRVNNGGATDTR.

It localises to the secreted. Its subcellular location is the cell wall. In Arabidopsis thaliana (Mouse-ear cress), this protein is 54 kDa cell wall protein.